The primary structure comprises 110 residues: UPF0122 protein SERP0802 (110 aa).

Belongs to the UPF0122 family.

Might take part in the signal recognition particle (SRP) pathway. This is inferred from the conservation of its genetic proximity to ftsY/ffh. May be a regulatory protein. In Staphylococcus epidermidis (strain ATCC 35984 / DSM 28319 / BCRC 17069 / CCUG 31568 / BM 3577 / RP62A), this protein is UPF0122 protein SERP0802.